Reading from the N-terminus, the 141-residue chain is Galactose-6-phosphate isomerase subunit LacA 1 (141 aa).

Belongs to the LacAB/RpiB family. In terms of assembly, heteromultimeric protein consisting of LacA and LacB.

The enzyme catalyses aldehydo-D-galactose 6-phosphate = keto-D-tagatose 6-phosphate. Its pathway is carbohydrate metabolism; D-galactose 6-phosphate degradation; D-tagatose 6-phosphate from D-galactose 6-phosphate: step 1/1. This is Galactose-6-phosphate isomerase subunit LacA 1 from Streptococcus pyogenes serotype M3 (strain SSI-1).